A 160-amino-acid polypeptide reads, in one-letter code: SsrA-binding protein (160 aa).

The protein belongs to the SmpB family.

Its subcellular location is the cytoplasm. Required for rescue of stalled ribosomes mediated by trans-translation. Binds to transfer-messenger RNA (tmRNA), required for stable association of tmRNA with ribosomes. tmRNA and SmpB together mimic tRNA shape, replacing the anticodon stem-loop with SmpB. tmRNA is encoded by the ssrA gene; the 2 termini fold to resemble tRNA(Ala) and it encodes a 'tag peptide', a short internal open reading frame. During trans-translation Ala-aminoacylated tmRNA acts like a tRNA, entering the A-site of stalled ribosomes, displacing the stalled mRNA. The ribosome then switches to translate the ORF on the tmRNA; the nascent peptide is terminated with the 'tag peptide' encoded by the tmRNA and targeted for degradation. The ribosome is freed to recommence translation, which seems to be the essential function of trans-translation. The chain is SsrA-binding protein from Salmonella agona (strain SL483).